The chain runs to 329 residues: Glyceraldehyde-3-phosphate dehydrogenase 1 (329 aa).

Residues arginine 11–isoleucine 12, aspartate 33, and lysine 78 each bind NAD(+). D-glyceraldehyde 3-phosphate-binding positions include serine 148–threonine 150, threonine 179, threonine 208–glycine 209, and arginine 231. The active-site Nucleophile is the cysteine 149. Asparagine 313 lines the NAD(+) pocket.

This sequence belongs to the glyceraldehyde-3-phosphate dehydrogenase family. As to quaternary structure, homotetramer.

Its subcellular location is the cytoplasm. It carries out the reaction D-glyceraldehyde 3-phosphate + phosphate + NAD(+) = (2R)-3-phospho-glyceroyl phosphate + NADH + H(+). It participates in carbohydrate degradation; glycolysis; pyruvate from D-glyceraldehyde 3-phosphate: step 1/5. The chain is Glyceraldehyde-3-phosphate dehydrogenase 1 (GAP1) from Kluyveromyces lactis (strain ATCC 8585 / CBS 2359 / DSM 70799 / NBRC 1267 / NRRL Y-1140 / WM37) (Yeast).